We begin with the raw amino-acid sequence, 265 residues long: Type II pantothenate kinase (265 aa).

6–13 (DAGGTLIK) lines the ATP pocket. Glu-70 functions as the Proton acceptor in the catalytic mechanism. Residues Thr-99, 121 to 125 (GGMIQ), Tyr-137, and Ser-225 each bind ATP.

The protein belongs to the type II pantothenate kinase family. Homodimer.

It localises to the cytoplasm. It catalyses the reaction (R)-pantothenate + ATP = (R)-4'-phosphopantothenate + ADP + H(+). Its pathway is cofactor biosynthesis; coenzyme A biosynthesis; CoA from (R)-pantothenate: step 1/5. Functionally, catalyzes the phosphorylation of pantothenate (Pan), the first step in CoA biosynthesis. This chain is Type II pantothenate kinase, found in Staphylococcus epidermidis (strain ATCC 35984 / DSM 28319 / BCRC 17069 / CCUG 31568 / BM 3577 / RP62A).